Consider the following 142-residue polypeptide: Hemoglobin subunit alpha-1 (142 aa).

Position 1 is an N-acetylserine (Ser1). The region spanning 1–142 is the Globin domain; it reads SLSDKDKAAV…VALALAQRYR (142 aa). Residue His59 coordinates O2. Residue His88 participates in heme b binding.

The protein belongs to the globin family. As to quaternary structure, hb1 is a heterotetramer of two alpha-2 chains and two beta chains. Red blood cells.

Its function is as follows. Involved in oxygen transport from gills to the various peripheral tissues. This chain is Hemoglobin subunit alpha-1 (hba1), found in Notothenia neglecta (Yellowbelly rockcod).